Reading from the N-terminus, the 193-residue chain is ATP-dependent Clp protease proteolytic subunit (193 aa).

Ser98 functions as the Nucleophile in the catalytic mechanism. Residue His123 is part of the active site.

This sequence belongs to the peptidase S14 family. As to quaternary structure, fourteen ClpP subunits assemble into 2 heptameric rings which stack back to back to give a disk-like structure with a central cavity, resembling the structure of eukaryotic proteasomes.

The protein localises to the cytoplasm. It catalyses the reaction Hydrolysis of proteins to small peptides in the presence of ATP and magnesium. alpha-casein is the usual test substrate. In the absence of ATP, only oligopeptides shorter than five residues are hydrolyzed (such as succinyl-Leu-Tyr-|-NHMec, and Leu-Tyr-Leu-|-Tyr-Trp, in which cleavage of the -Tyr-|-Leu- and -Tyr-|-Trp bonds also occurs).. In terms of biological role, cleaves peptides in various proteins in a process that requires ATP hydrolysis. Has a chymotrypsin-like activity. Plays a major role in the degradation of misfolded proteins. The protein is ATP-dependent Clp protease proteolytic subunit of Histophilus somni (strain 2336) (Haemophilus somnus).